Here is a 602-residue protein sequence, read N- to C-terminus: Elongation factor 4 (602 aa).

Residues 7 to 189 (RNIRNFSIIA…AIVHRIPPPK (183 aa)) form the tr-type G domain. GTP is bound by residues 19–24 (DHGKST) and 136–139 (NKID).

The protein belongs to the TRAFAC class translation factor GTPase superfamily. Classic translation factor GTPase family. LepA subfamily.

It localises to the cell inner membrane. The enzyme catalyses GTP + H2O = GDP + phosphate + H(+). Required for accurate and efficient protein synthesis under certain stress conditions. May act as a fidelity factor of the translation reaction, by catalyzing a one-codon backward translocation of tRNAs on improperly translocated ribosomes. Back-translocation proceeds from a post-translocation (POST) complex to a pre-translocation (PRE) complex, thus giving elongation factor G a second chance to translocate the tRNAs correctly. Binds to ribosomes in a GTP-dependent manner. In Stenotrophomonas maltophilia (strain R551-3), this protein is Elongation factor 4.